The following is a 150-amino-acid chain: Anthranilate synthase component 1 (150 aa).

Serine 40 is an L-tryptophan binding site. Arginine 119 contacts chorismate.

It belongs to the anthranilate synthase component I family. Heterotetramer consisting of two non-identical subunits: a beta subunit (TrpG) and a large alpha subunit (TrpE). Mg(2+) serves as cofactor.

It catalyses the reaction chorismate + L-glutamine = anthranilate + pyruvate + L-glutamate + H(+). The protein operates within amino-acid biosynthesis; L-tryptophan biosynthesis; L-tryptophan from chorismate: step 1/5. Its activity is regulated as follows. Feedback inhibited by tryptophan. Part of a heterotetrameric complex that catalyzes the two-step biosynthesis of anthranilate, an intermediate in the biosynthesis of L-tryptophan. In the first step, the glutamine-binding beta subunit (TrpG) of anthranilate synthase (AS) provides the glutamine amidotransferase activity which generates ammonia as a substrate that, along with chorismate, is used in the second step, catalyzed by the large alpha subunit of AS (TrpE) to produce anthranilate. In the absence of TrpG, TrpE can synthesize anthranilate directly from chorismate and high concentrations of ammonia. The protein is Anthranilate synthase component 1 (trpE) of Citrobacter freundii.